The primary structure comprises 617 residues: BTB/POZ domain-containing protein At3g08570 (617 aa).

Residues 36–106 (GDITIVVDGE…CYGINFEITI (71 aa)) enclose the BTB domain. One can recognise an NPH3 domain in the interval 210 to 490 (EWWIEDLSAL…VRVLYSEQLR (281 aa)). Residue Tyr431 is modified to Phosphotyrosine. 2 disordered regions span residues 505–525 (LSSQ…RDTY) and 585–617 (GGGP…ESMF). Over residues 602–617 (SRLERKTVRSRPESMF) the composition is skewed to basic and acidic residues.

The protein belongs to the NPH3 family.

It functions in the pathway protein modification; protein ubiquitination. Functionally, may act as a substrate-specific adapter of an E3 ubiquitin-protein ligase complex (CUL3-RBX1-BTB) which mediates the ubiquitination and subsequent proteasomal degradation of target proteins. In Arabidopsis thaliana (Mouse-ear cress), this protein is BTB/POZ domain-containing protein At3g08570.